The primary structure comprises 182 residues: UPF0316 protein BCQ_3166 (182 aa).

3 consecutive transmembrane segments (helical) span residues 6–26, 32–52, and 58–78; these read LIFVLQIIYVPILTIRTILLV, SAAAVGLLEGAIYIVSLGIVF, and WMNIVAYVIGFSAGLLLGGYI.

It belongs to the UPF0316 family.

It localises to the cell membrane. The chain is UPF0316 protein BCQ_3166 from Bacillus cereus (strain Q1).